Reading from the N-terminus, the 348-residue chain is NADH-ubiquinone oxidoreductase chain 2 (348 aa).

A run of 10 helical transmembrane segments spans residues 3–23 (PFIL…TFAS), 24–44 (SHWL…IPLM), 60–80 (FITQ…NAWI), 95–115 (ASML…HFWL), 136–156 (LAPF…ITFL), 177–197 (ILAY…QFNQ), 198–218 (QLAL…FMIF), 239–259 (LTAI…LSGF), 273–293 (DIPL…YFYL), and 325–345 (LAIS…TLAL).

Belongs to the complex I subunit 2 family.

It localises to the mitochondrion inner membrane. The catalysed reaction is a ubiquinone + NADH + 5 H(+)(in) = a ubiquinol + NAD(+) + 4 H(+)(out). Core subunit of the mitochondrial membrane respiratory chain NADH dehydrogenase (Complex I) that is believed to belong to the minimal assembly required for catalysis. Complex I functions in the transfer of electrons from NADH to the respiratory chain. The immediate electron acceptor for the enzyme is believed to be ubiquinone. The sequence is that of NADH-ubiquinone oxidoreductase chain 2 (MT-ND2) from Gadus morhua (Atlantic cod).